The primary structure comprises 355 residues: MGAMGVNFLAGDIGGTKTILALVTINESSPGLARPVTLFEQTYSSPAFPDLVPMVQQFRQEAAFVLGNPISVAKACFAIAGPVIDNTCRLTNLDWHLSGDRLAQELAIAQVDLINDFAAVGYGILGLGSEDLTVLQAAPVDPSGAIAILGAGTGLGQCYVIPQGQGRYRVFASEGAHGDFAPRSPLEWQLLEYLKKKYSLGRISIERVVSGMGIAMIYEFLRHQYPERESAQFSKLYQTWNREKDQETKTVDLAAAVSQAALEGTDVLADQAMELFLGAYGAEAGNLALKLLPRGGLYVAGGIAPKIIPLLEKGSFMQGFSDKGRMQSLMGTIPVQVVLNAKVGLIGAAVCAAQS.

11–16 contacts ATP; it reads GDIGGT.

The protein belongs to the bacterial glucokinase family.

The protein resides in the cytoplasm. It catalyses the reaction D-glucose + ATP = D-glucose 6-phosphate + ADP + H(+). This is Glucokinase from Synechocystis sp. (strain ATCC 27184 / PCC 6803 / Kazusa).